Here is a 188-residue protein sequence, read N- to C-terminus: Quinone reductase (188 aa).

FMN is bound by residues 13 to 20 (SLRKGSFN), 82 to 85 (EYNY), and serine 117.

The protein belongs to the SsuE family. As to quaternary structure, homotetramer. Dimer of dimers. The tetrameric configuration has a central role in chromate reductase activity. Requires FMN as cofactor.

The enzyme catalyses a quinone + NADH + H(+) = a quinol + NAD(+). It catalyses the reaction a quinone + NADPH + H(+) = a quinol + NADP(+). It carries out the reaction Cr(6+) + 2 NADH + O2 = Cr(3+) + superoxide + 2 NAD(+) + 2 H(+). The catalysed reaction is Cr(6+) + 2 NADPH + O2 = Cr(3+) + superoxide + 2 NADP(+) + 2 H(+). In terms of biological role, catalyzes the reduction of quinones. Acts by simultaneous two-electron transfer, avoiding formation of highly reactive semiquinone intermediates and producing quinols that promote tolerance of H(2)O(2). Quinone reduction is probably the primary biological role of ChrR. Can also reduce toxic chromate to insoluble and less toxic Cr(3+). Catalyzes the transfer of three electrons to Cr(6+) producing Cr(3+) and one electron to molecular oxygen without producing the toxic Cr(5+) species and only producing a minimal amount of reactive oxygen species (ROS). Chromate reduction protects the cell against chromate toxicity, but is likely a secondary activity. This is Quinone reductase (chrR) from Escherichia coli O157:H7.